The primary structure comprises 114 residues: MAVNIYDTANQMEQEIRQTSEYKSLQEAFAEVRKDEHASALYSKFQDVQSNLQQKQMNGEELTEEEIKNVHEIADQIEKVDLIKDLMDKERNMNQLFSDVSQIIVKPIQELYKN.

Belongs to the UPF0342 family.

The protein is UPF0342 protein PEPE_0673 of Pediococcus pentosaceus (strain ATCC 25745 / CCUG 21536 / LMG 10740 / 183-1w).